The chain runs to 421 residues: Gamma-glutamyl phosphate reductase (421 aa).

This sequence belongs to the gamma-glutamyl phosphate reductase family.

It localises to the cytoplasm. It carries out the reaction L-glutamate 5-semialdehyde + phosphate + NADP(+) = L-glutamyl 5-phosphate + NADPH + H(+). It participates in amino-acid biosynthesis; L-proline biosynthesis; L-glutamate 5-semialdehyde from L-glutamate: step 2/2. Its function is as follows. Catalyzes the NADPH-dependent reduction of L-glutamate 5-phosphate into L-glutamate 5-semialdehyde and phosphate. The product spontaneously undergoes cyclization to form 1-pyrroline-5-carboxylate. The chain is Gamma-glutamyl phosphate reductase from Leptospira biflexa serovar Patoc (strain Patoc 1 / ATCC 23582 / Paris).